We begin with the raw amino-acid sequence, 209 residues long: Regulator of G-protein signaling 1 (209 aa).

A disordered region spans residues 19–42 (FSASPKDSKEHSHSLLDDKKQKKR). Over residues 24-38 (KDSKEHSHSLLDDKK) the composition is skewed to basic and acidic residues. In terms of domain architecture, RGS spans 85 to 200 (SLEKLLANQT…LKSNIYLNLL (116 aa)).

In terms of assembly, interacts with GNAI1 and GNAQ. As to expression, detected in spleen, lymph node and intestine.

The protein localises to the cell membrane. The protein resides in the cytoplasm. It localises to the cytosol. Its function is as follows. Regulates G protein-coupled receptor signaling cascades, including signaling downstream of the N-formylpeptide chemoattractant receptors and leukotriene receptors. Inhibits B cell chemotaxis toward CXCL12. Inhibits signal transduction by increasing the GTPase activity of G protein alpha subunits thereby driving them into their inactive GDP-bound form. The chain is Regulator of G-protein signaling 1 (Rgs1) from Mus musculus (Mouse).